The sequence spans 518 residues: Probable pectinesterase/pectinesterase inhibitor 16 (518 aa).

A signal peptide spans 1–33; sequence MASSSSISNHKIPNTLMFLVIVNFLYLIQTNSA. The segment at 30–172 is pectinesterase inhibitor 16; the sequence is TNSAVSISSN…TGLLTSSLDL (143 aa). N-linked (GlcNAc...) asparagine glycans are attached at residues Asn82 and Asn161. Residues 213 to 502 are pectinesterase 16; the sequence is DAVVAPDGSG…FTVASFIDGN (290 aa). Positions 289 and 319 each coordinate substrate. Asp342 (proton donor; for pectinesterase activity) is an active-site residue. The Nucleophile; for pectinesterase activity role is filled by Asp363. 2 residues coordinate substrate: Arg422 and Trp424.

In the N-terminal section; belongs to the PMEI family. It in the C-terminal section; belongs to the pectinesterase family. As to expression, expressed in siliques and floral stems.

The protein localises to the secreted. The protein resides in the cell wall. It carries out the reaction [(1-&gt;4)-alpha-D-galacturonosyl methyl ester](n) + n H2O = [(1-&gt;4)-alpha-D-galacturonosyl](n) + n methanol + n H(+). Its pathway is glycan metabolism; pectin degradation; 2-dehydro-3-deoxy-D-gluconate from pectin: step 1/5. Functionally, acts in the modification of cell walls via demethylesterification of cell wall pectin. The protein is Probable pectinesterase/pectinesterase inhibitor 16 (PME16) of Arabidopsis thaliana (Mouse-ear cress).